A 172-amino-acid chain; its full sequence is Bacilliredoxin SRU_0242 (172 aa).

Residues 141–172 (TDEAPPSDAPSRPDLSSSPNAGGLPSTFQSIS) form a disordered region. Residues 154–172 (DLSSSPNAGGLPSTFQSIS) show a composition bias toward polar residues.

The protein belongs to the bacilliredoxin family.

The sequence is that of Bacilliredoxin SRU_0242 from Salinibacter ruber (strain DSM 13855 / M31).